Reading from the N-terminus, the 486-residue chain is Ribulose bisphosphate carboxylase large chain, chromosomal (486 aa).

Asparagine 126 and threonine 176 together coordinate substrate. Residue lysine 178 is the Proton acceptor of the active site. Lysine 180 contacts substrate. Mg(2+)-binding residues include lysine 204, aspartate 206, and glutamate 207. Lysine 204 is subject to N6-carboxylysine. Catalysis depends on histidine 296, which acts as the Proton acceptor. The substrate site is built by arginine 297, histidine 329, and serine 381.

The protein belongs to the RuBisCO large chain family. Type I subfamily. As to quaternary structure, heterohexadecamer of 8 large chains and 8 small chains; disulfide-linked. The disulfide link is formed within the large subunit homodimers. Mg(2+) is required as a cofactor. In terms of processing, the disulfide bond which can form between Cys-278 in the large chain dimeric partners within the hexadecamer appears to be associated with oxidative stress and protein turnover.

It carries out the reaction 2 (2R)-3-phosphoglycerate + 2 H(+) = D-ribulose 1,5-bisphosphate + CO2 + H2O. The enzyme catalyses D-ribulose 1,5-bisphosphate + O2 = 2-phosphoglycolate + (2R)-3-phosphoglycerate + 2 H(+). Functionally, ruBisCO catalyzes two reactions: the carboxylation of D-ribulose 1,5-bisphosphate, the primary event in carbon dioxide fixation, as well as the oxidative fragmentation of the pentose substrate. Both reactions occur simultaneously and in competition at the same active site. The polypeptide is Ribulose bisphosphate carboxylase large chain, chromosomal (cbbL1) (Cupriavidus necator (strain ATCC 17699 / DSM 428 / KCTC 22496 / NCIMB 10442 / H16 / Stanier 337) (Ralstonia eutropha)).